A 155-amino-acid polypeptide reads, in one-letter code: Large ribosomal subunit protein eL24 (155 aa).

Residues 93–123 show a composition bias toward basic and acidic residues; it reads KRNARPETRNATRAKHAEAAKERKEKEAERR. Positions 93–155 are disordered; sequence KRNARPETRN…SAPKVQATSR (63 aa).

Belongs to the eukaryotic ribosomal protein eL24 family.

The chain is Large ribosomal subunit protein eL24 (RPL24) from Yarrowia lipolytica (strain CLIB 122 / E 150) (Yeast).